The chain runs to 465 residues: 6-phospho-beta-glucosidase GmuD (465 aa).

E170 serves as the catalytic Proton donor. The active-site Nucleophile is E368.

Belongs to the glycosyl hydrolase 1 family.

The catalysed reaction is 6-phospho-beta-D-glucosyl-(1-&gt;4)-D-glucose + H2O = D-glucose 6-phosphate + D-glucose. In terms of biological role, phospho-beta-D-glucosidase that seems to be involved in the degradation of glucomannan. Is also capable of hydrolyzing aryl-phospho-beta-D-glucosides, although very weakly, and plays only a minor role, if any, in the degradation of these substrates in vivo. The chain is 6-phospho-beta-glucosidase GmuD (gmuD) from Bacillus subtilis (strain 168).